A 765-amino-acid chain; its full sequence is Protein transport protein sec23-2 (765 aa).

Cysteine 56, cysteine 60, cysteine 79, and cysteine 82 together coordinate Zn(2+). Serine 565 and serine 566 each carry phosphoserine.

It belongs to the SEC23/SEC24 family. SEC23 subfamily. As to quaternary structure, the COPII coat is composed of at least 5 proteins: the sec23/24 complex, the sec13/31 complex, and the protein sar1.

The protein localises to the cytoplasm. It is found in the cytoplasmic vesicle. Its subcellular location is the COPII-coated vesicle membrane. It localises to the endoplasmic reticulum membrane. The protein resides in the golgi apparatus membrane. Its function is as follows. Component of the coat protein complex II (COPII) which promotes the formation of transport vesicles from the endoplasmic reticulum (ER). The coat has two main functions, the physical deformation of the endoplasmic reticulum membrane into vesicles and the selection of cargo molecules. This chain is Protein transport protein sec23-2 (sec232), found in Schizosaccharomyces pombe (strain 972 / ATCC 24843) (Fission yeast).